Reading from the N-terminus, the 378-residue chain is Probable dihydroorotase-like protein (378 aa).

Belongs to the metallo-dependent hydrolases superfamily. DHOase family. PyrC' subfamily.

Functionally, non-functional DHOase. The sequence is that of Probable dihydroorotase-like protein (pyrC') from Helicobacter pylori (strain J99 / ATCC 700824) (Campylobacter pylori J99).